A 417-amino-acid chain; its full sequence is Serine hydroxymethyltransferase (417 aa).

(6S)-5,6,7,8-tetrahydrofolate is bound by residues L120 and G124 to L126. K229 is subject to N6-(pyridoxal phosphate)lysine. S354–F356 is a binding site for (6S)-5,6,7,8-tetrahydrofolate.

Belongs to the SHMT family. In terms of assembly, homodimer. The cofactor is pyridoxal 5'-phosphate.

The protein localises to the cytoplasm. It carries out the reaction (6R)-5,10-methylene-5,6,7,8-tetrahydrofolate + glycine + H2O = (6S)-5,6,7,8-tetrahydrofolate + L-serine. It functions in the pathway one-carbon metabolism; tetrahydrofolate interconversion. The protein operates within amino-acid biosynthesis; glycine biosynthesis; glycine from L-serine: step 1/1. Functionally, catalyzes the reversible interconversion of serine and glycine with tetrahydrofolate (THF) serving as the one-carbon carrier. This reaction serves as the major source of one-carbon groups required for the biosynthesis of purines, thymidylate, methionine, and other important biomolecules. Also exhibits THF-independent aldolase activity toward beta-hydroxyamino acids, producing glycine and aldehydes, via a retro-aldol mechanism. The protein is Serine hydroxymethyltransferase of Acinetobacter baylyi (strain ATCC 33305 / BD413 / ADP1).